A 123-amino-acid chain; its full sequence is 13 kDa major membrane protein (123 aa).

It is found in the cell membrane. The sequence is that of 13 kDa major membrane protein from Francisella tularensis subsp. holarctica (strain LVS).